Here is a 112-residue protein sequence, read N- to C-terminus: MKTLLTILALTLVTLTTWLSTPAFAADIADGAKVFSANCAACHMGGGNVVMANKTLKKEALEQFGMNSADAIMYQVQNGKNAMPAFGGRLSEAQIENVAAYVLDQSSKNWAG.

Residues 1–25 (MKTLLTILALTLVTLTTWLSTPAFA) form the signal peptide. Positions 39, 42, 43, and 83 each coordinate heme c.

Belongs to the cytochrome c family. PetJ subfamily. In terms of assembly, monomer. In terms of processing, binds 1 heme c group covalently per subunit.

It is found in the cellular thylakoid lumen. Its function is as follows. Functions as an electron carrier between membrane-bound cytochrome b6-f and photosystem I in oxygenic photosynthesis. This is Cytochrome c6 from Synechococcus sp. (strain ATCC 27167 / PCC 6312).